We begin with the raw amino-acid sequence, 406 residues long: Angiopoietin-related protein 4 (406 aa).

The N-terminal stretch at 1 to 25 (MSGAPTAGAALMLCAATAVLLSAQG) is a signal peptide. The stretch at 100-143 (EVLHSLQTQLKAQNSRIQQLFHKVAQQQRHLEKQHLRIQHLQSQ) forms a coiled coil. An N-linked (GlcNAc...) asparagine glycan is attached at Asn177. In terms of domain architecture, Fibrinogen C-terminal spans 179-401 (SRLHRLPRDC…ATTMLIQPMA (223 aa)). 2 disulfides stabilise this stretch: Cys188-Cys216 and Cys341-Cys354.

As to quaternary structure, homooligomer; disulfide-linked via Cys residues in the N-terminal part of the protein. The homooligomer undergoes proteolytic processing to release the ANGPTL4 C-terminal chain, which circulates as a monomer. The homooligomer unprocessed form is able to interact with the extracellular matrix. In terms of processing, N-glycosylated. Forms disulfide-linked dimers and tetramers. Post-translationally, cleaved into a smaller N-terminal chain and a larger chain that contains the fibrinogen C-terminal domain; both cleaved and uncleaved forms are detected in the extracellular space. The cleaved form is not present within the cell. Detected in blood plasma (at protein level). Detected in liver. Detected in white fat tissue and placenta. Expressed at high levels in the placenta, heart, liver, muscle, pancreas and lung but expressed poorly in the brain and kidney.

The protein localises to the secreted. Its subcellular location is the extracellular space. It localises to the extracellular matrix. In terms of biological role, mediates inactivation of the lipoprotein lipase LPL, and thereby plays a role in the regulation of triglyceride clearance from the blood serum and in lipid metabolism. May also play a role in regulating glucose homeostasis and insulin sensitivity. Inhibits proliferation, migration, and tubule formation of endothelial cells and reduces vascular leakage. Upon heterologous expression, inhibits the adhesion of endothelial cell to the extracellular matrix (ECM), and inhibits the reorganization of the actin cytoskeleton, formation of actin stress fibers and focal adhesions in endothelial cells that have adhered to ANGPTL4-containing ECM (in vitro). Depending on context, may modulate tumor-related angiogenesis. Functionally, mediates inactivation of the lipoprotein lipase LPL, and thereby plays an important role in the regulation of triglyceride clearance from the blood serum and in lipid metabolism. Has higher activity in LPL inactivation than the uncleaved protein. The protein is Angiopoietin-related protein 4 (ANGPTL4) of Homo sapiens (Human).